The sequence spans 525 residues: Apolipoprotein N-acyltransferase 2 (525 aa).

6 consecutive transmembrane segments (helical) span residues 25 to 45, 56 to 76, 81 to 101, 115 to 135, 153 to 173, and 200 to 220; these read ILNFGSAIAGFSGLVLVYYAL, FLYGFFVSFVHLMSSFWLAFF, IFTLGASTLAYFFIAMPFGFL, FFFAAIWLLWEFAKSTGFLAY, FVDITGVWGLSFIVPLIAACL, and LIFTAFLVLIINIYGITILSI. The 259-residue stretch at 228-486 folds into the CN hydrolase domain; sequence LNTVIVQQNT…AESVYTEVPV (259 aa). Glu-274 functions as the Proton acceptor in the catalytic mechanism. The active site involves Lys-339. Catalysis depends on Cys-397, which acts as the Nucleophile. A helical membrane pass occupies residues 495-515; it reads ASYKDWLPIMMFLILIFNIFL.

The protein belongs to the CN hydrolase family. Apolipoprotein N-acyltransferase subfamily.

It is found in the cell inner membrane. The enzyme catalyses N-terminal S-1,2-diacyl-sn-glyceryl-L-cysteinyl-[lipoprotein] + a glycerophospholipid = N-acyl-S-1,2-diacyl-sn-glyceryl-L-cysteinyl-[lipoprotein] + a 2-acyl-sn-glycero-3-phospholipid + H(+). The protein operates within protein modification; lipoprotein biosynthesis (N-acyl transfer). Its function is as follows. Catalyzes the phospholipid dependent N-acylation of the N-terminal cysteine of apolipoprotein, the last step in lipoprotein maturation. This chain is Apolipoprotein N-acyltransferase 2, found in Treponema denticola (strain ATCC 35405 / DSM 14222 / CIP 103919 / JCM 8153 / KCTC 15104).